Consider the following 505-residue polypeptide: Mannosyl-oligosaccharide alpha-1,2-mannosidase 1B (505 aa).

A signal peptide spans 1 to 16; sequence MRTLLALAALAGFAAA. N-linked (GlcNAc...) asparagine glycosylation is found at Asn-88 and Asn-174. Cysteines 325 and 354 form a disulfide. A glycan (N-linked (GlcNAc...) asparagine) is linked at Asn-359. The active-site Proton donor is the Glu-368. Residue Thr-494 coordinates Ca(2+).

It belongs to the glycosyl hydrolase 47 family. Monomer. It depends on Ca(2+) as a cofactor. Requires Mg(2+) as cofactor.

It localises to the cytoplasmic vesicle lumen. The enzyme catalyses N(4)-(alpha-D-Man-(1-&gt;2)-alpha-D-Man-(1-&gt;2)-alpha-D-Man-(1-&gt;3)-[alpha-D-Man-(1-&gt;2)-alpha-D-Man-(1-&gt;3)-[alpha-D-Man-(1-&gt;2)-alpha-D-Man-(1-&gt;6)]-alpha-D-Man-(1-&gt;6)]-beta-D-Man-(1-&gt;4)-beta-D-GlcNAc-(1-&gt;4)-beta-D-GlcNAc)-L-asparaginyl-[protein] (N-glucan mannose isomer 9A1,2,3B1,2,3) + 4 H2O = N(4)-(alpha-D-Man-(1-&gt;3)-[alpha-D-Man-(1-&gt;3)-[alpha-D-Man-(1-&gt;6)]-alpha-D-Man-(1-&gt;6)]-beta-D-Man-(1-&gt;4)-beta-D-GlcNAc-(1-&gt;4)-beta-D-GlcNAc)-L-asparaginyl-[protein] (N-glucan mannose isomer 5A1,2) + 4 beta-D-mannose. It carries out the reaction N(4)-(alpha-D-Man-(1-&gt;2)-alpha-D-Man-(1-&gt;2)-alpha-D-Man-(1-&gt;3)-[alpha-D-Man-(1-&gt;3)-[alpha-D-Man-(1-&gt;2)-alpha-D-Man-(1-&gt;6)]-alpha-D-Man-(1-&gt;6)]-beta-D-Man-(1-&gt;4)-beta-D-GlcNAc-(1-&gt;4)-beta-D-GlcNAc)-L-asparaginyl-[protein] (N-glucan mannose isomer 8A1,2,3B1,3) + 3 H2O = N(4)-(alpha-D-Man-(1-&gt;3)-[alpha-D-Man-(1-&gt;3)-[alpha-D-Man-(1-&gt;6)]-alpha-D-Man-(1-&gt;6)]-beta-D-Man-(1-&gt;4)-beta-D-GlcNAc-(1-&gt;4)-beta-D-GlcNAc)-L-asparaginyl-[protein] (N-glucan mannose isomer 5A1,2) + 3 beta-D-mannose. It participates in protein modification; protein glycosylation. Its function is as follows. Involved in the maturation of Asn-linked oligosaccharides. Progressively trims alpha-1,2-linked mannose residues from Man(9)GlcNAc(2) to produce Man(5)GlcNAc(2). In Emericella nidulans (strain FGSC A4 / ATCC 38163 / CBS 112.46 / NRRL 194 / M139) (Aspergillus nidulans), this protein is Mannosyl-oligosaccharide alpha-1,2-mannosidase 1B (mns1B).